Reading from the N-terminus, the 792-residue chain is Ribonucleoside-diphosphate reductase large subunit (792 aa).

Substrate-binding positions include Thr-200, 215–216 (SC), Gly-246, 415–419 (NLCAE), and 606–610 (PTAGT). Cys-216 and Cys-431 are oxidised to a cystine. The active-site Proton acceptor is Asn-415. The active-site Cysteine radical intermediate is Cys-417. The active-site Proton acceptor is the Glu-419. The disordered stretch occupies residues 758–781 (SPPHSGMKQDGAWLPGPKNPEEES).

The protein belongs to the ribonucleoside diphosphate reductase large chain family. In terms of assembly, heterotetramer composed of a homodimer of the large subunit (R1) and a homodimer of the small subunit (R2). Larger multisubunit protein complex are also active, composed of (R1)n(R2)n.

The enzyme catalyses a 2'-deoxyribonucleoside 5'-diphosphate + [thioredoxin]-disulfide + H2O = a ribonucleoside 5'-diphosphate + [thioredoxin]-dithiol. Its function is as follows. Ribonucleoside-diphosphate reductase holoenzyme provides the precursors necessary for viral DNA synthesis. Allows virus growth in non-dividing cells, as well as reactivation from latency in infected hosts. Catalyzes the biosynthesis of deoxyribonucleotides from the corresponding ribonucleotides. The sequence is that of Ribonucleoside-diphosphate reductase large subunit from Human herpesvirus 8 type P (isolate GK18) (HHV-8).